Consider the following 156-residue polypeptide: Putative pre-16S rRNA nuclease (156 aa).

This sequence belongs to the YqgF nuclease family.

It is found in the cytoplasm. In terms of biological role, could be a nuclease involved in processing of the 5'-end of pre-16S rRNA. The polypeptide is Putative pre-16S rRNA nuclease (Phenylobacterium zucineum (strain HLK1)).